Here is a 223-residue protein sequence, read N- to C-terminus: Imidazoleglycerol-phosphate dehydratase (223 aa).

Belongs to the imidazoleglycerol-phosphate dehydratase family.

The catalysed reaction is D-erythro-1-(imidazol-4-yl)glycerol 3-phosphate = 3-(imidazol-4-yl)-2-oxopropyl phosphate + H2O. Its pathway is amino-acid biosynthesis; L-histidine biosynthesis; L-histidine from 5-phospho-alpha-D-ribose 1-diphosphate: step 6/9. This Torulaspora delbrueckii (Yeast) protein is Imidazoleglycerol-phosphate dehydratase (HIS3).